Consider the following 517-residue polypeptide: Lysophosphatidylcholine acyltransferase 2B (517 aa).

N29 is a glycosylation site (N-linked (GlcNAc...) asparagine). The next 3 membrane-spanning stretches (helical) occupy residues 70-90 (IVFL…NLPI), 103-123 (LIKP…GFLI), and 137-157 (IFVV…VAGL). The HXXXXD motif signature appears at 143–148 (HSTFFD). EF-hand domains follow at residues 388–423 (PISE…LCNP) and 425–460 (NTEK…AFGV). The Ca(2+) site is built by D401, N403, D405, T407, E412, D438, D440, D442, Y444, and E449.

The protein belongs to the 1-acyl-sn-glycerol-3-phosphate acyltransferase family.

The protein resides in the membrane. The protein operates within lipid metabolism; phospholipid metabolism. Probable acetyltransferase. The sequence is that of Lysophosphatidylcholine acyltransferase 2B (Lpcat2b) from Rattus norvegicus (Rat).